Consider the following 247-residue polypeptide: Chalcone--flavanone isomerase (247 aa).

The substrate site is built by threonine 56, asparagine 121, and serine 198. Positions 223-235 (ENKVEEDATKTDQ) are enriched in basic and acidic residues. Residues 223 to 247 (ENKVEEDATKTDQEEANDLSLAKEN) are disordered.

This sequence belongs to the chalcone isomerase family.

It carries out the reaction a chalcone = a flavanone.. The protein operates within secondary metabolite biosynthesis; flavonoid biosynthesis. Its function is as follows. Catalyzes the intramolecular cyclization of bicyclic chalcones into tricyclic (S)-flavanones. Responsible for the isomerization of 4,2',4',6'-tetrahydroxychalcone (also termed chalcone) into naringenin. This chain is Chalcone--flavanone isomerase (CHI), found in Raphanus sativus (Radish).